We begin with the raw amino-acid sequence, 684 residues long: DNA ligase (684 aa).

NAD(+) contacts are provided by residues 48-52 (DYEYD), 97-98 (SL), and Glu-129. The active-site N6-AMP-lysine intermediate is the Lys-131. NAD(+) is bound by residues Arg-152, Glu-189, Lys-310, and Lys-334. Residues Cys-429, Cys-432, Cys-447, and Cys-452 each coordinate Zn(2+). The 76-residue stretch at 609–684 (AQEGSLSGMS…ISWEELQAMI (76 aa)) folds into the BRCT domain.

The protein belongs to the NAD-dependent DNA ligase family. LigA subfamily. Requires Mg(2+) as cofactor. It depends on Mn(2+) as a cofactor.

The enzyme catalyses NAD(+) + (deoxyribonucleotide)n-3'-hydroxyl + 5'-phospho-(deoxyribonucleotide)m = (deoxyribonucleotide)n+m + AMP + beta-nicotinamide D-nucleotide.. Functionally, DNA ligase that catalyzes the formation of phosphodiester linkages between 5'-phosphoryl and 3'-hydroxyl groups in double-stranded DNA using NAD as a coenzyme and as the energy source for the reaction. It is essential for DNA replication and repair of damaged DNA. The sequence is that of DNA ligase from Bdellovibrio bacteriovorus (strain ATCC 15356 / DSM 50701 / NCIMB 9529 / HD100).